Reading from the N-terminus, the 621-residue chain is KIF-binding protein (621 aa).

Residues 51-75 are disordered; the sequence is GPAPEDEDERPEAEDGPGAGDHALG. Residues 54 to 65 show a composition bias toward acidic residues; the sequence is PEDEDERPEAED. Residue S178 is modified to Phosphoserine.

It belongs to the KIF-binding protein family. In terms of assembly, interacts with KIF1B; positively regulates KIF1B microtubule motor activity. Interacts with STMN2. In terms of tissue distribution, highly expressed in heart, brain, ovary, testis, spinal cord and all specific brain regions examined. Moderate expressed at intermediate level in all other adult tissues examined, as well as in fetal liver and brain. Not expressed in blood leukocytes.

It localises to the cytoplasm. The protein resides in the cytoskeleton. In terms of biological role, activator of KIF1B plus-end-directed microtubule motor activity. Required for organization of axonal microtubules, and axonal outgrowth and maintenance during peripheral and central nervous system development. The protein is KIF-binding protein of Homo sapiens (Human).